The following is a 338-amino-acid chain: Glycerol-3-phosphate dehydrogenase [NAD(P)+] (338 aa).

Ser-12, Trp-13, Arg-33, and Lys-110 together coordinate NADPH. Residues Lys-110, Gly-141, and Ser-143 each coordinate sn-glycerol 3-phosphate. Ala-145 lines the NADPH pocket. Positions 196, 249, 259, 260, and 261 each coordinate sn-glycerol 3-phosphate. Lys-196 functions as the Proton acceptor in the catalytic mechanism. Arg-260 provides a ligand contact to NADPH. Positions 284 and 286 each coordinate NADPH.

This sequence belongs to the NAD-dependent glycerol-3-phosphate dehydrogenase family.

The protein localises to the cytoplasm. The catalysed reaction is sn-glycerol 3-phosphate + NAD(+) = dihydroxyacetone phosphate + NADH + H(+). The enzyme catalyses sn-glycerol 3-phosphate + NADP(+) = dihydroxyacetone phosphate + NADPH + H(+). It functions in the pathway membrane lipid metabolism; glycerophospholipid metabolism. Its function is as follows. Catalyzes the reduction of the glycolytic intermediate dihydroxyacetone phosphate (DHAP) to sn-glycerol 3-phosphate (G3P), the key precursor for phospholipid synthesis. This chain is Glycerol-3-phosphate dehydrogenase [NAD(P)+], found in Limosilactobacillus reuteri (strain DSM 20016) (Lactobacillus reuteri).